A 194-amino-acid polypeptide reads, in one-letter code: Imidazoleglycerol-phosphate dehydratase (194 aa).

The protein belongs to the imidazoleglycerol-phosphate dehydratase family.

It is found in the cytoplasm. The enzyme catalyses D-erythro-1-(imidazol-4-yl)glycerol 3-phosphate = 3-(imidazol-4-yl)-2-oxopropyl phosphate + H2O. Its pathway is amino-acid biosynthesis; L-histidine biosynthesis; L-histidine from 5-phospho-alpha-D-ribose 1-diphosphate: step 6/9. The sequence is that of Imidazoleglycerol-phosphate dehydratase from Bacillus anthracis (strain A0248).